Here is a 520-residue protein sequence, read N- to C-terminus: Trichothecene O-acetyltransferase TRI3 (520 aa).

Residues 1 to 23 form a disordered region; sequence MGSKLPELPKLSPEKHRWEKSNV. Basic and acidic residues predominate over residues 12 to 23; it reads SPEKHRWEKSNV.

Belongs to the trichothecene O-acetyltransferase family.

Its pathway is sesquiterpene biosynthesis; trichothecene biosynthesis. Trichothecene O-acetyltransferase; part of the gene cluster that mediates the production of the antimicrobial trichothecene harzianum A (HA) that plays a role in Botrytis cinerea antagonistic activity and plant defense priming. The biosynthesis of harzianum A begins with the cyclization of farnesyl diphosphate to trichodiene and is catalyzed by the trichodiene synthase TRI5. Trichodiene undergoes a series of oxygenations catalyzed by the cytochrome P450 monooxygenase TRI4. TRI4 controls the addition of 3 oxygens at C-2, C-11, and the C-12, C-13-epoxide to form the intermediate isotrichodiol. Isotrichodiol then undergoes a non-enzymatic isomerization and cyclization to form 12,13-epoxytrichothec-9-ene (EPT) which is further converted to trichodermol by the cytochrome P450 monooxygenase TRI11 via C-4 hydroxylation. The last step of HA synthesis is esterification of an octatriendioyl moiety to the C-4 oxygen of trichodermol. The octatriendioyl moiety is probably produced by the polyketide synthase TRI17 and the esterification performed by the trichothecene O-acetyltransferase TRI3. The protein is Trichothecene O-acetyltransferase TRI3 of Trichoderma arundinaceum.